The chain runs to 299 residues: tRNA dimethylallyltransferase (299 aa).

13-20 (GPTASGKT) serves as a coordination point for ATP. Substrate is bound at residue 15–20 (TASGKT). Residues 38 to 41 (DSRQ) form an interaction with substrate tRNA region.

Belongs to the IPP transferase family. As to quaternary structure, monomer. Mg(2+) serves as cofactor.

It catalyses the reaction adenosine(37) in tRNA + dimethylallyl diphosphate = N(6)-dimethylallyladenosine(37) in tRNA + diphosphate. Its function is as follows. Catalyzes the transfer of a dimethylallyl group onto the adenine at position 37 in tRNAs that read codons beginning with uridine, leading to the formation of N6-(dimethylallyl)adenosine (i(6)A). In Synechococcus sp. (strain CC9605), this protein is tRNA dimethylallyltransferase.